We begin with the raw amino-acid sequence, 1416 residues long: DNA-directed RNA polymerase subunit beta' (1416 aa).

Zn(2+) contacts are provided by C71, C73, C86, and C89. Positions 461, 463, and 465 each coordinate Mg(2+). C815, C889, C896, and C899 together coordinate Zn(2+).

Belongs to the RNA polymerase beta' chain family. As to quaternary structure, the RNAP catalytic core consists of 2 alpha, 1 beta, 1 beta' and 1 omega subunit. When a sigma factor is associated with the core the holoenzyme is formed, which can initiate transcription. The cofactor is Mg(2+). It depends on Zn(2+) as a cofactor.

It catalyses the reaction RNA(n) + a ribonucleoside 5'-triphosphate = RNA(n+1) + diphosphate. Its function is as follows. DNA-dependent RNA polymerase catalyzes the transcription of DNA into RNA using the four ribonucleoside triphosphates as substrates. In Haemophilus influenzae (strain 86-028NP), this protein is DNA-directed RNA polymerase subunit beta'.